Here is a 257-residue protein sequence, read N- to C-terminus: Imidazole glycerol phosphate synthase subunit HisF (257 aa).

Active-site residues include Asp12 and Asp131.

It belongs to the HisA/HisF family. Heterodimer of HisH and HisF.

It is found in the cytoplasm. It catalyses the reaction 5-[(5-phospho-1-deoxy-D-ribulos-1-ylimino)methylamino]-1-(5-phospho-beta-D-ribosyl)imidazole-4-carboxamide + L-glutamine = D-erythro-1-(imidazol-4-yl)glycerol 3-phosphate + 5-amino-1-(5-phospho-beta-D-ribosyl)imidazole-4-carboxamide + L-glutamate + H(+). The protein operates within amino-acid biosynthesis; L-histidine biosynthesis; L-histidine from 5-phospho-alpha-D-ribose 1-diphosphate: step 5/9. Functionally, IGPS catalyzes the conversion of PRFAR and glutamine to IGP, AICAR and glutamate. The HisF subunit catalyzes the cyclization activity that produces IGP and AICAR from PRFAR using the ammonia provided by the HisH subunit. The protein is Imidazole glycerol phosphate synthase subunit HisF of Burkholderia pseudomallei (strain 1106a).